The sequence spans 458 residues: tRNA modification GTPase MnmE (458 aa).

3 residues coordinate (6S)-5-formyl-5,6,7,8-tetrahydrofolate: arginine 26, glutamate 88, and arginine 127. One can recognise a TrmE-type G domain in the interval 224–378; that stretch reads GLSTAIIGRP…IEDRINQLFF (155 aa). Asparagine 234 lines the K(+) pocket. GTP is bound by residues 234–239, 253–259, and 278–281; these read NVGKSS, TDIAGTT, and DTAG. Serine 238 serves as a coordination point for Mg(2+). K(+) is bound by residues threonine 253, isoleucine 255, and threonine 258. Threonine 259 provides a ligand contact to Mg(2+). (6S)-5-formyl-5,6,7,8-tetrahydrofolate is bound at residue lysine 458.

The protein belongs to the TRAFAC class TrmE-Era-EngA-EngB-Septin-like GTPase superfamily. TrmE GTPase family. As to quaternary structure, homodimer. Heterotetramer of two MnmE and two MnmG subunits. K(+) serves as cofactor.

The protein localises to the cytoplasm. Exhibits a very high intrinsic GTPase hydrolysis rate. Involved in the addition of a carboxymethylaminomethyl (cmnm) group at the wobble position (U34) of certain tRNAs, forming tRNA-cmnm(5)s(2)U34. This Streptococcus pyogenes serotype M4 (strain MGAS10750) protein is tRNA modification GTPase MnmE.